Here is a 530-residue protein sequence, read N- to C-terminus: 3-oxo-5-alpha-steroid 4-dehydrogenase (530 aa).

33 to 62 lines the FAD pocket; that stretch reads DVVVVGWGGAGASAAIEAREQGAEVLVIER. The chain crosses the membrane as a helical span at residues 395–415; it reads AWQCLFGGLWAFQSMPALALM.

The protein belongs to the FAD-dependent oxidoreductase 2 family. FAD serves as cofactor.

The protein resides in the membrane. It carries out the reaction a 3-oxo-5alpha-steroid + A = a 3-oxo-Delta(4)-steroid + AH2. The enzyme catalyses 5alpha-androstan-3,17-dione + A = androst-4-ene-3,17-dione + AH2. The catalysed reaction is 5alpha-androst-1-ene-3,17-dione + A = androsta-1,4-diene-3,17-dione + AH2. Its activity is regulated as follows. Inhibition occurs with substrate concentrations above 25 uM. Involved in the degradation of steroids having an A:B ring fusion in a trans configuration. Catalyzes the elimination of hydrogens located at positions 4 and 5 and the introduction of double bonds into ring A. The sequence is that of 3-oxo-5-alpha-steroid 4-dehydrogenase from Comamonas testosteroni (Pseudomonas testosteroni).